A 302-amino-acid chain; its full sequence is Nucleotide-binding protein Bmul_0520/BMULJ_02739 (302 aa).

8 to 15 contacts ATP; it reads GISGSGKS. 57-60 serves as a coordination point for GTP; that stretch reads DARS.

It belongs to the RapZ-like family.

Functionally, displays ATPase and GTPase activities. The polypeptide is Nucleotide-binding protein Bmul_0520/BMULJ_02739 (Burkholderia multivorans (strain ATCC 17616 / 249)).